The following is a 352-amino-acid chain: MASWPPLELQSSNQSQLFPQNATACDNAPEAWDLLHRVLPTFIISICSFGLLGNLFVLLVFLLPRRRLNVAEIYLANLAASDLVFVLGLPFWAENIWNQFNWPFGALLCRVINGIIKANLFISIFLVVAISQDRYCVLVHPMASRRRQRRRQARVTCVLIWVVGGLLSIPTFLLRSIQAVPDLNITACILLLPHEAWHFARIVELNILAFLLPLAAIIFFNYHILASLRGREEVSRTRCGGSKDSKTTALILTLVVAFLVCWAPYHFFAFLEFLFQVQAVRGCFWEDFIDLGLQLANFLAFTNSSLNPVIYVFVGRLFRTKVWELYKQCTPKSLAPISSSHRKEIFQLFWRN.

Over 1-41 (MASWPPLELQSSNQSQLFPQNATACDNAPEAWDLLHRVLPT) the chain is Extracellular. Residues Asn-13 and Asn-21 are each glycosylated (N-linked (GlcNAc...) asparagine). A helical transmembrane segment spans residues 42 to 62 (FIISICSFGLLGNLFVLLVFL). Residues 63–72 (LPRRRLNVAE) are Cytoplasmic-facing. A helical membrane pass occupies residues 73–93 (IYLANLAASDLVFVLGLPFWA). The Extracellular segment spans residues 94–110 (ENIWNQFNWPFGALLCR). Cysteines 109 and 188 form a disulfide. Residues 111–131 (VINGIIKANLFISIFLVVAIS) form a helical membrane-spanning segment. Topologically, residues 132-153 (QDRYCVLVHPMASRRRQRRRQA) are cytoplasmic. Residues 154 to 174 (RVTCVLIWVVGGLLSIPTFLL) traverse the membrane as a helical segment. The Extracellular portion of the chain corresponds to 175-206 (RSIQAVPDLNITACILLLPHEAWHFARIVELN). N-linked (GlcNAc...) asparagine glycosylation occurs at Asn-184. A helical membrane pass occupies residues 207–227 (ILAFLLPLAAIIFFNYHILAS). Over 228 to 250 (LRGREEVSRTRCGGSKDSKTTAL) the chain is Cytoplasmic. Residues 251–271 (ILTLVVAFLVCWAPYHFFAFL) traverse the membrane as a helical segment. Over 272 to 294 (EFLFQVQAVRGCFWEDFIDLGLQ) the chain is Extracellular. Residues 295 to 315 (LANFLAFTNSSLNPVIYVFVG) form a helical membrane-spanning segment. Over 316 to 352 (RLFRTKVWELYKQCTPKSLAPISSSHRKEIFQLFWRN) the chain is Cytoplasmic. Residue Cys-329 is the site of S-palmitoyl cysteine attachment.

This sequence belongs to the G-protein coupled receptor 1 family. Bradykinin receptor subfamily. BDKRB1 sub-subfamily.

The protein localises to the cell membrane. Its function is as follows. This is a receptor for bradykinin. Could be a factor in chronic pain and inflammation. This is B1 bradykinin receptor (BDKRB1) from Macaca mulatta (Rhesus macaque).